A 306-amino-acid polypeptide reads, in one-letter code: Homoserine O-acetyltransferase (306 aa).

Catalysis depends on Cys-142, which acts as the Acyl-thioester intermediate. The substrate site is built by Lys-163 and Ser-192. The active-site Proton acceptor is His-235. The active site involves Glu-237. Arg-249 contacts substrate.

It belongs to the MetA family.

The protein resides in the cytoplasm. The catalysed reaction is L-homoserine + acetyl-CoA = O-acetyl-L-homoserine + CoA. Its pathway is amino-acid biosynthesis; L-methionine biosynthesis via de novo pathway; O-acetyl-L-homoserine from L-homoserine: step 1/1. Its function is as follows. Transfers an acetyl group from acetyl-CoA to L-homoserine, forming acetyl-L-homoserine. The protein is Homoserine O-acetyltransferase of Brucella abortus (strain S19).